Consider the following 208-residue polypeptide: Peptidyl-tRNA hydrolase 2 (208 aa).

Positions 32–45 (SNASSTKKSSATLL) are enriched in low complexity. The segment at 32 to 81 (SNASSTKKSSATLLRSKEMKEGKLHNDTDEEESESEDESDEDEDIESTSL) is disordered. Over residues 46-58 (RSKEMKEGKLHND) the composition is skewed to basic and acidic residues. Positions 59-77 (TDEEESESEDESDEDEDIE) are enriched in acidic residues. Residue Lys152 forms a Glycyl lysine isopeptide (Lys-Gly) (interchain with G-Cter in ubiquitin) linkage.

The protein belongs to the PTH2 family.

Its subcellular location is the cytoplasm. The catalysed reaction is an N-acyl-L-alpha-aminoacyl-tRNA + H2O = an N-acyl-L-amino acid + a tRNA + H(+). In terms of biological role, the natural substrate for this enzyme may be peptidyl-tRNAs which drop off the ribosome during protein synthesis. The polypeptide is Peptidyl-tRNA hydrolase 2 (Saccharomyces cerevisiae (strain ATCC 204508 / S288c) (Baker's yeast)).